A 331-amino-acid polypeptide reads, in one-letter code: Probable staphylococcal-like nuclease CAN1 (331 aa).

Glycine 2 carries N-myristoyl glycine lipidation. A lipid anchor (S-palmitoyl cysteine) is attached at cysteine 10. A TNase-like domain is found at 136–313; that stretch reads HTLPVDAKAV…QSGRKGLWAA (178 aa). Aspartate 149 provides a ligand contact to Ca(2+). Arginine 220 is a catalytic residue. Residue aspartate 225 coordinates Ca(2+). Residues glutamate 228 and arginine 262 contribute to the active site. Residues 306 to 331 form a disordered region; that stretch reads GRKGLWAASRPQKPWEWRRDKRNGTA. A compositionally biased stretch (basic and acidic residues) spans 318–331; it reads KPWEWRRDKRNGTA.

Belongs to the thermonuclease family. It depends on Ca(2+) as a cofactor.

It is found in the cell membrane. In terms of biological role, enzyme that catalyzes the hydrolysis of both DNA and RNA at the 5' position of the phosphodiester bond. This Oryza sativa subsp. japonica (Rice) protein is Probable staphylococcal-like nuclease CAN1.